Here is a 241-residue protein sequence, read N- to C-terminus: Triosephosphate isomerase (241 aa).

Substrate is bound at residue 9-11; it reads NWK. Catalysis depends on histidine 96, which acts as the Electrophile. Glutamate 165 functions as the Proton acceptor in the catalytic mechanism. Substrate is bound by residues glycine 171, serine 204, and 225–226; that span reads GG.

The protein belongs to the triosephosphate isomerase family. In terms of assembly, homodimer.

It localises to the cytoplasm. The enzyme catalyses D-glyceraldehyde 3-phosphate = dihydroxyacetone phosphate. The protein operates within carbohydrate biosynthesis; gluconeogenesis. It participates in carbohydrate degradation; glycolysis; D-glyceraldehyde 3-phosphate from glycerone phosphate: step 1/1. Its function is as follows. Involved in the gluconeogenesis. Catalyzes stereospecifically the conversion of dihydroxyacetone phosphate (DHAP) to D-glyceraldehyde-3-phosphate (G3P). The protein is Triosephosphate isomerase of Nostoc sp. (strain PCC 7120 / SAG 25.82 / UTEX 2576).